Reading from the N-terminus, the 116-residue chain is Large ribosomal subunit protein bL17 (116 aa).

The protein belongs to the bacterial ribosomal protein bL17 family. In terms of assembly, part of the 50S ribosomal subunit. Contacts protein L32.

The protein is Large ribosomal subunit protein bL17 of Cyanothece sp. (strain PCC 7425 / ATCC 29141).